The primary structure comprises 259 residues: uncharacterized protein (259 aa).

An N-terminal signal peptide occupies residues Met1–Gly22. Cys23 carries N-palmitoyl cysteine lipidation. Residue Cys23 is the site of S-diacylglycerol cysteine attachment.

Belongs to the staphylococcal tandem lipoprotein family.

Its subcellular location is the cell membrane. This is an uncharacterized protein from Staphylococcus epidermidis (strain ATCC 35984 / DSM 28319 / BCRC 17069 / CCUG 31568 / BM 3577 / RP62A).